Reading from the N-terminus, the 24-residue chain is Brevinin-1Pa (24 aa).

Cys-18 and Cys-24 form a disulfide bridge.

As to expression, expressed by the skin glands.

The protein localises to the secreted. Its function is as follows. Antibacterial activity against Gram-positive bacterium S.aureus and Gram-negative bacterium E.coli. Has activity against C.albicans. This is Brevinin-1Pa from Lithobates pipiens (Northern leopard frog).